Consider the following 754-residue polypeptide: 5-methyltetrahydropteroyltriglutamate--homocysteine methyltransferase (754 aa).

5-methyltetrahydropteroyltri-L-glutamate contacts are provided by residues 17–20 and Lys-117; that span reads RELK. L-homocysteine contacts are provided by residues 431 to 433 and Glu-484; that span reads IGS. L-methionine is bound by residues 431-433 and Glu-484; that span reads IGS. Residues 515-516 and Trp-561 each bind 5-methyltetrahydropteroyltri-L-glutamate; that span reads RC. Position 599 (Asp-599) interacts with L-homocysteine. Residue Asp-599 participates in L-methionine binding. 5-methyltetrahydropteroyltri-L-glutamate is bound at residue Glu-605. Zn(2+)-binding residues include His-641, Cys-643, and Glu-665. His-694 (proton donor) is an active-site residue. Position 726 (Cys-726) interacts with Zn(2+).

This sequence belongs to the vitamin-B12 independent methionine synthase family. It depends on Zn(2+) as a cofactor.

The catalysed reaction is 5-methyltetrahydropteroyltri-L-glutamate + L-homocysteine = tetrahydropteroyltri-L-glutamate + L-methionine. It participates in amino-acid biosynthesis; L-methionine biosynthesis via de novo pathway; L-methionine from L-homocysteine (MetE route): step 1/1. Functionally, catalyzes the transfer of a methyl group from 5-methyltetrahydrofolate to homocysteine resulting in methionine formation. The polypeptide is 5-methyltetrahydropteroyltriglutamate--homocysteine methyltransferase (Salmonella arizonae (strain ATCC BAA-731 / CDC346-86 / RSK2980)).